The chain runs to 254 residues: Low affinity immunoglobulin gamma Fc region receptor III-A (254 aa).

An N-terminal signal peptide occupies residues 1–16 (MWQLLLPTALLLLVSA). The Extracellular segment spans residues 17–208 (GMRTEDLPKA…ISSFFPPGYQ (192 aa)). Ig-like C2-type domains lie at 24–105 (PKAV…LEVH) and 107–189 (GWLL…VNIT). C47 and C89 are joined by a disulfide. 3 N-linked (GlcNAc...) asparagine glycosylation sites follow: N56, N63, and N92. C128 and C172 are joined by a disulfide. Residues N180 and N187 are each glycosylated (N-linked (GlcNAc...) asparagine). The chain crosses the membrane as a helical span at residues 209-229 (VSFCLVMVLLFAVDTGLYFSV). Residues 230–254 (KTNIRSSTRDWKDHKFKWRKDPQDK) are Cytoplasmic-facing. Phosphoserine; by PKC is present on S236. T237 bears the Phosphothreonine; by PKC mark.

Forms a heterooligomeric complex with ITAM-containing signaling subunits, either a homodimer of CD247, a homodimer of FCER1G or a heterodimer of CD247 and FCER1G. Interacts (via transmembrane domain) with signaling subunits; this interaction is a prerequisite for receptor complex expression on the cell surface and intracellular signal transduction. Binds the Fc region of antigen-complexed IgG with a preference for IgG1 and IgG3 isotypes. Interacts with CD2; this interaction is involved in NK cell activation and cytotoxicity. Interacts with S100A4; this interaction inhibits PKC-dependent phosphorylation of FCGR3A. In terms of processing, glycosylated. Contains high mannose- and complex-type oligosaccharides. Glycosylation at Asn-180 is mandatory for high affinity binding to the Fc and for discrimination between fucosylated and afucosylated IgG glycoforms. Undergoes rapid ectodomain shedding upon NK cell stimulation. The soluble form is produced by a proteolytic cleavage mediated by ADAM17. Repeated stimulation causes receptor shedding, a mechanism that allows for increased NK cell motility and detachment from opsonized target cells while avoiding activation-induced NK cell apoptosis. Post-translationally, phosphorylated at RSSTR motif by PKC. The relevant physiological PKCs might be PRKCI, PRKCG, PRKCE, PRKCH and PRKCQ. In terms of tissue distribution, expressed in natural killer cells (at protein level). Expressed in a subset of circulating monocytes (at protein level).

The protein resides in the cell membrane. It is found in the secreted. Its function is as follows. Receptor for the invariable Fc fragment of immunoglobulin gamma (IgG). Optimally activated upon binding of clustered antigen-IgG complexes displayed on cell surfaces, triggers lysis of antibody-coated cells, a process known as antibody-dependent cellular cytotoxicity (ADCC). Does not bind free monomeric IgG, thus avoiding inappropriate effector cell activation in the absence of antigenic trigger. Mediates IgG effector functions on natural killer (NK) cells. Binds antigen-IgG complexes generated upon infection and triggers NK cell-dependent cytokine production and degranulation to limit viral load and propagation. Involved in the generation of memory-like adaptive NK cells capable to produce high amounts of IFNG and to efficiently eliminate virus-infected cells via ADCC. Regulates NK cell survival and proliferation, in particular by preventing NK cell progenitor apoptosis. Fc-binding subunit that associates with CD247 and/or FCER1G adapters to form functional signaling complexes. Following the engagement of antigen-IgG complexes, triggers phosphorylation of immunoreceptor tyrosine-based activation motif (ITAM)-containing adapters with subsequent activation of phosphatidylinositol 3-kinase signaling and sustained elevation of intracellular calcium that ultimately drive NK cell activation. The ITAM-dependent signaling coupled to receptor phosphorylation by PKC mediates robust intracellular calcium flux that leads to production of pro-inflammatory cytokines, whereas in the absence of receptor phosphorylation it mainly activates phosphatidylinositol 3-kinase signaling leading to cell degranulation. Costimulates NK cells and trigger lysis of target cells independently of IgG binding. Mediates the antitumor activities of therapeutic antibodies. Upon ligation on monocytes triggers TNFA-dependent ADCC of IgG-coated tumor cells. Mediates enhanced ADCC in response to afucosylated IgGs. Functionally, (Microbial infection) Involved in Dengue virus pathogenesis via antibody-dependent enhancement (ADE) mechanism. Secondary infection with Dengue virus triggers elevated levels of afucosylated non-neutralizing IgG1s with reactivity to viral envelope/E protein. Viral antigen-IgG1 complexes bind with high affinity to FCGR3A, facilitating virus entry in myeloid cells and subsequent viral replication. This Homo sapiens (Human) protein is Low affinity immunoglobulin gamma Fc region receptor III-A.